The primary structure comprises 1456 residues: Macrophage mannose receptor 1 (1456 aa).

The signal sequence occupies residues 1–18; the sequence is MRLPLLLVFASVIPGAVL. Topologically, residues 19 to 1389 are extracellular; the sequence is LLDTRQFLIY…DPSKPSSNVA (1371 aa). One can recognise a Ricin B-type lectin domain in the interval 22–142; it reads TRQFLIYNED…SGLWSRWKIY (121 aa). 2 disulfide bridges follow: cysteine 35–cysteine 49 and cysteine 74–cysteine 91. An N-linked (GlcNAc...) asparagine glycan is attached at asparagine 104. The Fibronectin type-II domain occupies 163 to 211; that stretch reads ANGATCAFPFKFENKWYADCTSAGRSDGWLWCGTTTDYDTDKLFGYCPL. Disulfide bonds link cysteine 168–cysteine 194, cysteine 182–cysteine 209, cysteine 247–cysteine 340, and cysteine 316–cysteine 332. The region spanning 225–341 is the C-type lectin 1 domain; the sequence is LTSVSYQINS…CVQKLGYICK (117 aa). Asparagine 344 carries N-linked (GlcNAc...) asparagine glycosylation. C-type lectin domains are found at residues 369–487, 511–626, 655–778, and 807–923; these read YAGH…YICK, HHFY…FVCK, RTSL…WICQ, and YKDY…FICQ. Intrachain disulfides connect cysteine 391–cysteine 486 and cysteine 463–cysteine 478. Asparagine 529 is a glycosylation site (N-linked (GlcNAc...) asparagine). 7 disulfide bridges follow: cysteine 532-cysteine 625, cysteine 600-cysteine 617, cysteine 646-cysteine 659, cysteine 680-cysteine 777, cysteine 753-cysteine 769, cysteine 828-cysteine 922, and cysteine 899-cysteine 914. N-linked (GlcNAc...) asparagine glycosylation is found at asparagine 926 and asparagine 930. C-type lectin domains follow at residues 952–1080, 1102–1213, and 1241–1356; these read YSNK…YICQ, YGKS…FLCK, and FHGH…YICK. Intrachain disulfides connect cysteine 977/cysteine 1079, cysteine 1052/cysteine 1071, cysteine 1123/cysteine 1212, cysteine 1190/cysteine 1204, cysteine 1263/cysteine 1355, and cysteine 1332/cysteine 1347. Asparagine 1160 is a glycosylation site (N-linked (GlcNAc...) asparagine). Residue asparagine 1205 is glycosylated (N-linked (GlcNAc...) asparagine). A helical transmembrane segment spans residues 1390–1410; it reads GVVIIVILLILTGAGLAAYFF. Residues 1411 to 1456 are Cytoplasmic-facing; sequence YKKRRVHLPQEGAFENTLYFNSQSSPGTSDMKDLVGNIEQNEHSVI.

(Microbial infection) Interacts with Dengue virus. In terms of assembly, (Microbial infection) May act as a receptor for hepatitis B virus, enabling uptake of the virus in hepatic dendritic cells.

The protein localises to the endosome membrane. Its subcellular location is the cell membrane. In terms of biological role, mediates the endocytosis of glycoproteins by macrophages. Binds both sulfated and non-sulfated polysaccharide chains. (Microbial infection) Acts as a phagocytic receptor for bacteria, fungi and other pathogens. Its function is as follows. (Microbial infection) Acts as a receptor for Dengue virus envelope protein E. Functionally, (Microbial infection) Interacts with Hepatitis B virus envelope protein. This is Macrophage mannose receptor 1 (MRC1) from Homo sapiens (Human).